A 476-amino-acid polypeptide reads, in one-letter code: ATP synthase subunit beta (476 aa).

157–164 lines the ATP pocket; it reads GGAGVGKT.

Belongs to the ATPase alpha/beta chains family. As to quaternary structure, F-type ATPases have 2 components, CF(1) - the catalytic core - and CF(0) - the membrane proton channel. CF(1) has five subunits: alpha(3), beta(3), gamma(1), delta(1), epsilon(1). CF(0) has three main subunits: a(1), b(2) and c(9-12). The alpha and beta chains form an alternating ring which encloses part of the gamma chain. CF(1) is attached to CF(0) by a central stalk formed by the gamma and epsilon chains, while a peripheral stalk is formed by the delta and b chains.

The protein resides in the cell membrane. It catalyses the reaction ATP + H2O + 4 H(+)(in) = ADP + phosphate + 5 H(+)(out). Its function is as follows. Produces ATP from ADP in the presence of a proton gradient across the membrane. The catalytic sites are hosted primarily by the beta subunits. In Mycoplasma genitalium (strain ATCC 33530 / DSM 19775 / NCTC 10195 / G37) (Mycoplasmoides genitalium), this protein is ATP synthase subunit beta.